Here is a 481-residue protein sequence, read N- to C-terminus: Zinc metalloproteinase/disintegrin (481 aa).

A signal peptide spans 1–20 (MIQVLLVTICLAVFPYQGSS). The propeptide occupies 21–190 (IILESGNVDD…KASQLYLTPE (170 aa)). The Peptidase M12B domain maps to 197–392 (RYIKLAIVVD…DNPQCILNAP (196 aa)). 3 disulfides stabilise this stretch: C308/C387, C349/C371, and C351/C354. H333 is a binding site for Zn(2+). Residue E334 is part of the active site. Zn(2+) is bound by residues H337 and H343. Residues 393–408 (LRTDTVSTPVSGNEFL) constitute a propeptide that is removed on maturation. A Disintegrin domain is found at 400 to 481 (TPVSGNEFLE…ADCPRNGLYS (82 aa)). 6 disulfides stabilise this stretch: C414/C429, C416/C424, C423/C446, C437/C443, C442/C467, and C455/C474. Positions 459 to 461 (RGD) match the Cell attachment site motif.

This sequence belongs to the venom metalloproteinase (M12B) family. P-II subfamily. P-IIa sub-subfamily. Monomer. Zn(2+) serves as cofactor. Expressed by the venom gland.

Its subcellular location is the secreted. Functionally, impairs hemostasis in the envenomed animal. Its function is as follows. Inhibits platelet aggregation induced by ADP, thrombin, platelet-activating factor and collagen. Acts by inhibiting fibrinogen interaction with platelet receptors GPIIb/GPIIIa (ITGA2B/ITGB3). The protein is Zinc metalloproteinase/disintegrin of Protobothrops elegans (Elegant pitviper).